Here is a 372-residue protein sequence, read N- to C-terminus: Probable inactive receptor-like protein kinase At1g65250 (372 aa).

Residues Met1 to Leu4 and Lys38 contribute to the ATP site. In terms of domain architecture, Protein kinase spans Met1–Leu314. Phosphotyrosine occurs at positions 128 and 221. The disordered stretch occupies residues Ser348–Asn372. A compositionally biased stretch (polar residues) spans Gly354 to Asn372.

Belongs to the protein kinase superfamily.

The protein is Probable inactive receptor-like protein kinase At1g65250 of Arabidopsis thaliana (Mouse-ear cress).